Here is a 185-residue protein sequence, read N- to C-terminus: Elongation factor P (185 aa).

The protein belongs to the elongation factor P family.

The protein localises to the cytoplasm. The protein operates within protein biosynthesis; polypeptide chain elongation. Involved in peptide bond synthesis. Stimulates efficient translation and peptide-bond synthesis on native or reconstituted 70S ribosomes in vitro. Probably functions indirectly by altering the affinity of the ribosome for aminoacyl-tRNA, thus increasing their reactivity as acceptors for peptidyl transferase. The polypeptide is Elongation factor P (Nitrosomonas eutropha (strain DSM 101675 / C91 / Nm57)).